We begin with the raw amino-acid sequence, 136 residues long: Protein NrdI (136 aa).

This sequence belongs to the NrdI family.

Its function is as follows. Probably involved in ribonucleotide reductase function. In Salmonella paratyphi B (strain ATCC BAA-1250 / SPB7), this protein is Protein NrdI.